We begin with the raw amino-acid sequence, 726 residues long: X-ray repair cross-complementing protein 5 (726 aa).

Positions 8 to 160 (AVVLCMDVGL…ANLKKAEITL (153 aa)) constitute a VWFA domain. Positions 137–164 (LSSPFSVDQLEVIIANLKKAEITLQFFL) are leucine-zipper. Residues 175 to 186 (GSSNNRGNAGSS) are compositionally biased toward low complexity. Positions 175–198 (GSSNNRGNAGSSDRGCGPGKGLSD) are disordered. In terms of domain architecture, Ku spans 253 to 449 (GSSLSIRIVG…NKKFTPTESQ (197 aa)). Residues 714-722 (EDEGDVDDL) carry the EEXXXDL motif motif.

It belongs to the ku80 family. As to quaternary structure, heterodimer composed of xrcc5/Ku80 and xrcc6/Ku70. Post-translationally, ubiquitinated via 'Lys-48'-linked polyubiquitination at DNA double strand break sites (DSBs), leading to its release from DSBs and subsequent proteasomal degradation. Polyubiquitination is not required for completion of NHEJ. As to expression, expressed at high levels in oocyte and testis.

The protein localises to the nucleus. Single-stranded DNA-dependent ATP-dependent helicase that plays a key role in DNA non-homologous end joining (NHEJ). This chain is X-ray repair cross-complementing protein 5, found in Xenopus laevis (African clawed frog).